The primary structure comprises 565 residues: Urocanate hydratase (565 aa).

NAD(+)-binding positions include 58–59 (GG), Q136, 182–184 (GMG), E202, R207, 245–246 (NA), 266–270 (QTSAH), 276–277 (YL), and Y325. C413 is a catalytic residue. G495 serves as a coordination point for NAD(+).

This sequence belongs to the urocanase family. NAD(+) serves as cofactor.

Its subcellular location is the cytoplasm. It carries out the reaction 4-imidazolone-5-propanoate = trans-urocanate + H2O. Its pathway is amino-acid degradation; L-histidine degradation into L-glutamate; N-formimidoyl-L-glutamate from L-histidine: step 2/3. Catalyzes the conversion of urocanate to 4-imidazolone-5-propionate. The polypeptide is Urocanate hydratase (Vibrio vulnificus (strain YJ016)).